The sequence spans 407 residues: Probable sodium/metabolite cotransporter BASS5, chloroplastic (407 aa).

The transit peptide at 1–57 (MGVISPTETLFLKSQHRLLQPRNYSYALAFHSTRRVANFPRNSFSSLGSCSVDFPLR) directs the protein to the chloroplast. The next 9 membrane-spanning stretches (helical) occupy residues 101-121 (FIPH…PSFT), 122-142 (WFKP…VGIN), 162-184 (YIGQ…VSLF), 191-213 (GAGI…TFLT), 222-242 (IVMT…LSLL), 252-272 (VFGM…AGLL), 286-306 (PFLP…PLAL), 317-337 (ATIL…GYFF), and 379-399 (LVGV…VSLV).

Belongs to the bile acid:sodium symporter (BASS) (TC 2.A.28) family. As to expression, widely expressed.

The protein localises to the membrane. It is found in the plastid. The protein resides in the chloroplast envelope. In terms of biological role, plastidic transporter involved in the biosynthesis of aliphatic glucosinolates by translocating the biosynthetic intermediates of Met-derived glucosinolates across chloroplast membranes. Transports short chain (C2) alpha-keto acids, such as 4-methylsulfanyl-2-oxobutanoic acid, from the cytosol to the chloroplast where they are subjected to chain elongation cycles. Also functions in the transport of chain-elongated (C3 to C8) Met derivatives from the chloroplast to the cytosol. Does not seem to be involved in the transport of indole-derived glucosinolates. The polypeptide is Probable sodium/metabolite cotransporter BASS5, chloroplastic (BASS5) (Arabidopsis thaliana (Mouse-ear cress)).